Reading from the N-terminus, the 159-residue chain is Phosphopantetheine adenylyltransferase (159 aa).

Residue serine 9 coordinates substrate. ATP-binding positions include 9–10 and histidine 17; that span reads SF. Positions 41, 73, and 87 each coordinate substrate. ATP is bound by residues 88 to 90, glutamate 98, and 123 to 129; these read GLR and NIHISSS.

The protein belongs to the bacterial CoaD family. Homohexamer. It depends on Mg(2+) as a cofactor.

The protein resides in the cytoplasm. It carries out the reaction (R)-4'-phosphopantetheine + ATP + H(+) = 3'-dephospho-CoA + diphosphate. It participates in cofactor biosynthesis; coenzyme A biosynthesis; CoA from (R)-pantothenate: step 4/5. Reversibly transfers an adenylyl group from ATP to 4'-phosphopantetheine, yielding dephospho-CoA (dPCoA) and pyrophosphate. This is Phosphopantetheine adenylyltransferase from Clostridium beijerinckii (strain ATCC 51743 / NCIMB 8052) (Clostridium acetobutylicum).